The sequence spans 60 residues: Large ribosomal subunit protein bL32 (60 aa).

Residues 1-60 (MAVQQNKKSPSKRGMHRSHDFLVNPATAIEPNTGETHLRHHISPNGFYRGRKVLKTKADE) form a disordered region. Residues 49–60 (RGRKVLKTKADE) are compositionally biased toward basic residues.

The protein belongs to the bacterial ribosomal protein bL32 family.

This chain is Large ribosomal subunit protein bL32, found in Bordetella bronchiseptica (strain ATCC BAA-588 / NCTC 13252 / RB50) (Alcaligenes bronchisepticus).